Here is a 142-residue protein sequence, read N- to C-terminus: Hemoglobin F-I (142 aa).

In terms of domain architecture, Globin spans 2–142 (GLTTAQIKAI…AAGVLVAAMK (141 aa)). H95 provides a ligand contact to heme b.

Belongs to the globin family. In terms of assembly, homotetramer.

Functionally, hemoglobin F-I appears to function in storage, rather than transport of oxygen. This is Hemoglobin F-I from Urechis caupo (Innkeeper worm).